Consider the following 272-residue polypeptide: Glutamate racemase (272 aa).

Substrate is bound by residues 12–13 (DS) and 44–45 (YG). The active-site Proton donor/acceptor is the cysteine 75. 76–77 (NT) serves as a coordination point for substrate. Cysteine 185 serves as the catalytic Proton donor/acceptor. 186–187 (TH) is a substrate binding site.

The protein belongs to the aspartate/glutamate racemases family.

It catalyses the reaction L-glutamate = D-glutamate. The protein operates within cell wall biogenesis; peptidoglycan biosynthesis. In terms of biological role, provides the (R)-glutamate required for cell wall biosynthesis. The chain is Glutamate racemase from Mycobacterium leprae (strain TN).